Consider the following 40-residue polypeptide: Natriuretic peptide HsNP-b (40 aa).

Positions 1–8 (SGSKTAKI) are excised as a propeptide. Residues 1-40 (SGSKTAKIGDGCFGVPIDHIGSTTDLGCGRPRPKPTPRGS) form a disordered region. The cysteines at positions 12 and 28 are disulfide-linked. Over residues 31-40 (PRPKPTPRGS) the composition is skewed to basic residues.

It belongs to the natriuretic peptide family. Expressed by the venom gland.

Its subcellular location is the secreted. Functionally, snake venom natriuretic peptide that targets both NPR1 and NPR2. Exhibits hypotensive and vasodepressor activities. The polypeptide is Natriuretic peptide HsNP-b (Hoplocephalus stephensii (Stephens's banded snake)).